The chain runs to 94 residues: Large ribosomal subunit protein eL36 (94 aa).

Basic residues predominate over residues 1 to 25 (MKNAYKKVRVRYPVKRPDVKRKQRG). The interval 1–30 (MKNAYKKVRVRYPVKRPDVKRKQRGPRAET) is disordered.

The protein belongs to the eukaryotic ribosomal protein eL36 family. Component of the large ribosomal subunit.

It is found in the cytoplasm. The protein is Large ribosomal subunit protein eL36 (RPL36) of Encephalitozoon cuniculi (strain GB-M1) (Microsporidian parasite).